The following is a 512-amino-acid chain: Gasdermin-E (512 aa).

The segment at 1–56 is membrane targeting domain; the sequence is MFAKATRNFLKEVDAGGDLISVSHLNDSDKLQLLSLVTKKKRYWCWQRPKYQILSA. C45 is subject to S-(2-succinyl)cysteine. K120 is covalently cross-linked (Glycyl lysine isopeptide (Lys-Gly) (interchain with G-Cter in ubiquitin)). S-(2-succinyl)cysteine occurs at positions 156, 168, and 180. K189 participates in a covalent cross-link: Glycyl lysine isopeptide (Lys-Gly) (interchain with G-Cter in ubiquitin). Residues C235, C411, and C420 each carry the S-(2-succinyl)cysteine modification.

It belongs to the gasdermin family. As to quaternary structure, homooligomer; homooligomeric ring-shaped pore complex containing 27-28 subunits when inserted in the membrane. Post-translationally, cleavage at Asp-270 by CASP3 (mature and uncleaved precursor forms) or granzyme B (GZMB) relieves autoinhibition and is sufficient to initiate pyroptosis. In terms of processing, succination by the Krebs cycle intermediate fumarate, which leads to S-(2-succinyl)cysteine residues, inhibits processing by caspases, and ability to initiate pyroptosis. Succination modification is catalyzed by a non-enzymatic reaction caused by an accumulation of fumarate. Ubiquitinated on Lys-120 and Lys-189 via 'Lys-48'-linked polyubiquitin chains, leading to proteasomal degradation. Deubiquitinated by USP48, leading to increased stability. Post-translationally, palmitoylated. Expressed in spleen, kidney, large and small intestine, testicle, stomach and by CD4(+)CD(8+) T cells in thymus. Expressed by macrophages.

Its subcellular location is the cell membrane. It localises to the cytoplasm. The protein resides in the cytosol. With respect to regulation, the full-length protein before cleavage is inactive: intramolecular interactions between N- and C-terminal domains mediate autoinhibition in the absence of activation signal. The intrinsic pyroptosis-inducing activity is carried by the released N-terminal moiety (Gasdermin-E, N-terminal) following cleavage by CASP3 or granzyme B (GZMB). Activated by NLRP1 in the absence of GSDMD expression: NLRP1 cleaves and activates CASP8, promoting downstream activation of CASP3 and subsequent activation of GSDME. Its function is as follows. Precursor of a pore-forming protein that converts non-inflammatory apoptosis to pyroptosis. This form constitutes the precursor of the pore-forming protein: upon cleavage, the released N-terminal moiety (Gasdermin-E, N-terminal) binds to membranes and forms pores, triggering pyroptosis. Pore-forming protein produced by cleavage by CASP3 or granzyme B (GZMB), which converts non-inflammatory apoptosis to pyroptosis or promotes granzyme-mediated pyroptosis, respectively. After cleavage, moves to the plasma membrane, homooligomerizes within the membrane and forms pores of 10-15 nanometers (nm) of inner diameter, allowing the release of mature interleukins (IL1B and IL16) and triggering pyroptosis. Binds to inner leaflet lipids, bisphosphorylated phosphatidylinositols, such as phosphatidylinositol (4,5)-bisphosphate. Cleavage by CASP3 switches CASP3-mediated apoptosis induced by TNF or danger signals, such as chemotherapy drugs, to pyroptosis. Mediates secondary necrosis downstream of the mitochondrial apoptotic pathway and CASP3 activation as well as in response to viral agents. Exhibits bactericidal activity. Cleavage by GZMB promotes tumor suppressor activity by triggering robust anti-tumor immunity. Suppresses tumors by mediating granzyme-mediated pyroptosis in target cells of natural killer (NK) cells: cleavage by granzyme B (GZMB), delivered to target cells from NK-cells, triggers pyroptosis of tumor cells and tumor suppression. May play a role in the p53/TP53-regulated cellular response to DNA damage. This is Gasdermin-E from Mus musculus (Mouse).